A 434-amino-acid chain; its full sequence is Histidine--tRNA ligase (434 aa).

The protein belongs to the class-II aminoacyl-tRNA synthetase family. In terms of assembly, homodimer.

The protein localises to the cytoplasm. The catalysed reaction is tRNA(His) + L-histidine + ATP = L-histidyl-tRNA(His) + AMP + diphosphate + H(+). This Chlorobium phaeobacteroides (strain BS1) protein is Histidine--tRNA ligase.